Here is a 154-residue protein sequence, read N- to C-terminus: Superoxide dismutase [Cu-Zn] (154 aa).

Cu cation-binding residues include His47, His49, and His64. Cys58 and Cys147 are disulfide-bonded. Zn(2+)-binding residues include His64, His72, His81, and Asp84. Cu cation is bound at residue His121. Residues 124–137 (TDDLGKGENEESKK) show a composition bias toward basic and acidic residues. A disordered region spans residues 124 to 144 (TDDLGKGENEESKKTGNAGTR). Substrate is bound at residue Arg144.

It belongs to the Cu-Zn superoxide dismutase family. Homodimer. Cu cation serves as cofactor. The cofactor is Zn(2+).

It localises to the cytoplasm. The enzyme catalyses 2 superoxide + 2 H(+) = H2O2 + O2. In terms of biological role, destroys radicals which are normally produced within the cells and which are toxic to biological systems. This chain is Superoxide dismutase [Cu-Zn] (sod1), found in Botryotinia fuckeliana (Noble rot fungus).